Reading from the N-terminus, the 602-residue chain is Threonine--tRNA ligase (602 aa).

Positions Asp-208 to Pro-499 are catalytic. The Zn(2+) site is built by Cys-300, His-351, and His-476.

The protein belongs to the class-II aminoacyl-tRNA synthetase family. In terms of assembly, homodimer. Zn(2+) is required as a cofactor.

The protein resides in the cytoplasm. The catalysed reaction is tRNA(Thr) + L-threonine + ATP = L-threonyl-tRNA(Thr) + AMP + diphosphate + H(+). Its function is as follows. Catalyzes the attachment of threonine to tRNA(Thr) in a two-step reaction: L-threonine is first activated by ATP to form Thr-AMP and then transferred to the acceptor end of tRNA(Thr). Also edits incorrectly charged L-seryl-tRNA(Thr). This is Threonine--tRNA ligase from Campylobacter jejuni subsp. jejuni serotype O:6 (strain 81116 / NCTC 11828).